The following is a 63-amino-acid chain: Hyphancin-3E (63 aa).

A signal peptide spans 1–22 (MNFSRILFFVFTCFVALASVSG). A propeptide spans 23–26 (APEP) (removed by a dipeptidylpeptidase). Leu61 carries the post-translational modification Leucine amide.

This sequence belongs to the cecropin family.

The protein resides in the secreted. Its function is as follows. Has antibacterial activity. This Hyphantria cunea (Fall webworm moth) protein is Hyphancin-3E.